The primary structure comprises 159 residues: MSQVILDLQIASEQAQGLPEEKDFQRWLEGVLPQFQEVSEVTIRIVDEAESRDLNNTYRGKDKPTNVLSFPFEAPPEVELPLLGDLIICRQVVEQEAAEQEKTVEEHWAHMVVHGSLHLLGYDHIEDSEAEEMEALETEIMQSMGYADPYLAEKDGLTE.

Zn(2+) contacts are provided by histidine 114, histidine 118, and histidine 124.

The protein belongs to the endoribonuclease YbeY family. The cofactor is Zn(2+).

Its subcellular location is the cytoplasm. In terms of biological role, single strand-specific metallo-endoribonuclease involved in late-stage 70S ribosome quality control and in maturation of the 3' terminus of the 16S rRNA. This is Endoribonuclease YbeY from Pectobacterium carotovorum subsp. carotovorum (strain PC1).